A 350-amino-acid polypeptide reads, in one-letter code: MMMVARDVTRLPAGLLLAALTLAALTPRVGGVLFRGAGVSVHVAGSAVLVPGDAPNLTIDGTLLFLEGPSPSNYSGRVELLRLDPKRACYTREYAAEYDLCPRVHHEAFRGCLRKREPLARRASAAVEARRLLFVSRPAPPDAGSYVLRVRVNGTTDLFVLTALVPPRGRPHHPTPSSADECRPVVGSWHDSLRVVDPAEDAVFTTPPPIEPEPPTTPAPPRGTGATPEPRSDEEEEDEEGATTAMTPVPGTLDANGTMVLNASVVSRVLLAAANATAGARGPGKIAMVLGPTIVVLLIFLGGVACAARRCARGIASTGRDPGAARRSTRRPRGARPPTPSPGRPSPSPR.

A signal peptide spans M1 to G31. The Virion surface segment spans residues V32 to K285. N-linked (GlcNAc...) asparagine; by host glycosylation is found at N56, N73, and N153. Residues A202–L253 form a disordered region. The segment covering T206–P221 has biased composition (pro residues). Over residues S232 to G241 the composition is skewed to acidic residues. 3 N-linked (GlcNAc...) asparagine; by host glycosylation sites follow: N256, N262, and N275. A helical membrane pass occupies residues I286–A308. Residues R309–R350 lie on the Intravirion side of the membrane. A disordered region spans residues A316–R350. Residues A335–R350 show a composition bias toward pro residues.

This sequence belongs to the alphaherpesvirinae glycoprotein I family. In terms of assembly, interacts with gE.

The protein localises to the virion membrane. Its subcellular location is the host cell membrane. It localises to the host cell junction. The protein resides in the host Golgi apparatus membrane. Functionally, in epithelial cells, the heterodimer gE/gI is required for the cell-to-cell spread of the virus, by sorting nascent virions to cell junctions. Once the virus reaches the cell junctions, virus particles can spread to adjacent cells extremely rapidly through interactions with cellular receptors that accumulate at these junctions. Implicated in basolateral spread in polarized cells. In neuronal cells, gE/gI is essential for the anterograde spread of the infection throughout the host nervous system. Together with US9, the heterodimer gE/gI is involved in the sorting and transport of viral structural components toward axon tips. The polypeptide is Envelope glycoprotein I (gI) (Suid herpesvirus 1 (strain Rice) (SuHV-1)).